Reading from the N-terminus, the 299-residue chain is HTH-type transcriptional regulator ArgP (299 aa).

Residues 4–60 enclose the HTH lysR-type domain; sequence LDYKLLLALDAVMQEQNFERAAQRLHITQSAISQRIKQLEQQFAEPLLIRSQPLQAT. The H-T-H motif DNA-binding region spans 21–40; the sequence is FERAAQRLHITQSAISQRIK.

It belongs to the LysR transcriptional regulatory family. Homodimer.

Controls the transcription of genes involved in arginine and lysine metabolism. The sequence is that of HTH-type transcriptional regulator ArgP from Aeromonas salmonicida.